The sequence spans 617 residues: Probable Xaa-Pro aminopeptidase P (617 aa).

Mn(2+) contacts are provided by aspartate 414, aspartate 425, glutamate 523, and glutamate 537.

The protein belongs to the peptidase M24B family. Mn(2+) is required as a cofactor.

It catalyses the reaction Release of any N-terminal amino acid, including proline, that is linked to proline, even from a dipeptide or tripeptide.. In terms of biological role, catalyzes the removal of a penultimate prolyl residue from the N-termini of peptides. The sequence is that of Probable Xaa-Pro aminopeptidase P (AMPP) from Blastomyces gilchristii (strain SLH14081) (Blastomyces dermatitidis).